A 517-amino-acid polypeptide reads, in one-letter code: Acetylcholine receptor subunit gamma (517 aa).

Positions 1-22 are cleaved as a signal peptide; sequence MHGGQGPLLLLLLLAVCLGAQG. Residues 23-240 lie on the Extracellular side of the membrane; sequence RNQEERLLAD…VVFYLLIQRK (218 aa). 2 N-linked (GlcNAc...) asparagine glycosylation sites follow: asparagine 52 and asparagine 163. Cysteines 150 and 164 form a disulfide. A run of 3 helical transmembrane segments spans residues 241-265, 275-293, and 309-330; these read PLFY…IHFL, TVAI…LVAK, and LTFL…LNVS. At 331–474 the chain is on the cytoplasmic side; the sequence is LRSPHTHSMA…WFLVGRVLDR (144 aa). The chain crosses the membrane as a helical span at residues 475–495; that stretch reads VCFLAMLSLFICGTAGIFLMA.

This sequence belongs to the ligand-gated ion channel (TC 1.A.9) family. Acetylcholine receptor (TC 1.A.9.1) subfamily. Gamma/CHRNG sub-subfamily. In terms of assembly, pentamer of two alpha chains, and one each of the beta, delta, and gamma (in immature muscle) or epsilon (in mature muscle) chains.

Its subcellular location is the postsynaptic cell membrane. The protein resides in the cell membrane. The enzyme catalyses K(+)(in) = K(+)(out). It carries out the reaction Na(+)(in) = Na(+)(out). Functionally, after binding acetylcholine, the AChR responds by an extensive change in conformation that affects all subunits and leads to opening of an ion-conducting channel across the plasma membrane. This chain is Acetylcholine receptor subunit gamma, found in Homo sapiens (Human).